The chain runs to 178 residues: Large ribosomal subunit protein uL6 (178 aa).

It belongs to the universal ribosomal protein uL6 family. In terms of assembly, part of the 50S ribosomal subunit.

Functionally, this protein binds to the 23S rRNA, and is important in its secondary structure. It is located near the subunit interface in the base of the L7/L12 stalk, and near the tRNA binding site of the peptidyltransferase center. This is Large ribosomal subunit protein uL6 from Nautilia profundicola (strain ATCC BAA-1463 / DSM 18972 / AmH).